We begin with the raw amino-acid sequence, 215 residues long: FGFR1 oncogene partner 2 homolog (215 aa).

Residues 35 to 183 (LLNKRVEAMK…SGLRELLGIS (149 aa)) adopt a coiled-coil conformation.

It belongs to the SIKE family.

It is found in the cytoplasm. The chain is FGFR1 oncogene partner 2 homolog (fgfr1op2) from Danio rerio (Zebrafish).